The following is a 592-amino-acid chain: Movement and RNA silencing protein VP6 (592 aa).

The tract at residues 450-469 (SSDEENADDPNQGWNGTPVH) is disordered.

It localises to the host cell junction. The protein localises to the host plasmodesma. Functionally, transports viral genome to neighboring plant cells directly through plasmosdesmata, without any budding. The movement protein allows efficient cell to cell propagation, by bypassing the host cell wall barrier. Displays sequence non-specific nucleic acid binding activity. Acts as a suppressor of RNA-mediated gene silencing, also known as post-transcriptional gene silencing (PTGS), a mechanism of plant viral defense that limits the accumulation of viral RNAs. This chain is Movement and RNA silencing protein VP6, found in Oryza latifolia (Indian wild rice).